We begin with the raw amino-acid sequence, 59 residues long: Large ribosomal subunit protein bL32 (59 aa).

The tract at residues 1–20 (MAVPRNRHSNARKNIRRSHH) is disordered.

Belongs to the bacterial ribosomal protein bL32 family.

The protein is Large ribosomal subunit protein bL32 (rpmF) of Chlamydia muridarum (strain MoPn / Nigg).